The primary structure comprises 429 residues: Ribosomal RNA small subunit methyltransferase B (429 aa).

Residues 254–260, aspartate 277, aspartate 303, and aspartate 322 contribute to the S-adenosyl-L-methionine site; that span reads CAAPGGK. The active-site Nucleophile is cysteine 375.

The protein belongs to the class I-like SAM-binding methyltransferase superfamily. RsmB/NOP family.

The protein resides in the cytoplasm. The enzyme catalyses cytidine(967) in 16S rRNA + S-adenosyl-L-methionine = 5-methylcytidine(967) in 16S rRNA + S-adenosyl-L-homocysteine + H(+). Functionally, specifically methylates the cytosine at position 967 (m5C967) of 16S rRNA. The protein is Ribosomal RNA small subunit methyltransferase B of Photorhabdus laumondii subsp. laumondii (strain DSM 15139 / CIP 105565 / TT01) (Photorhabdus luminescens subsp. laumondii).